A 318-amino-acid chain; its full sequence is Beta-sarcoglycan (318 aa).

The segment at 1–32 (MAAAAAAAAEQQSSNGPVKKSMREKAVERRSV) is disordered. The Cytoplasmic portion of the chain corresponds to 1–65 (MAAAAAAAAE…GLRGRKGNLA (65 aa)). The segment covering 21 to 32 (SMREKAVERRSV) has biased composition (basic and acidic residues). Residues 66-86 (ICVIILLFILAVINLIITLVI) traverse the membrane as a helical; Signal-anchor for type II membrane protein segment. Residues 87–318 (WAVIRIGPNG…ISDNPCGNTH (232 aa)) lie on the Extracellular side of the membrane. N-linked (GlcNAc...) asparagine glycosylation is found at Asn-158, Asn-211, and Asn-258. Cystine bridges form between Cys-288/Cys-314 and Cys-290/Cys-307.

This sequence belongs to the sarcoglycan beta/delta/gamma/zeta family. In terms of assembly, cross-link to form 2 major subcomplexes: one consisting of SGCB, SGCD and SGCG and the other consisting of SGCB and SGCD. The association between SGCB and SGCG is particularly strong while SGCA is loosely associated with the other sarcoglycans. In terms of processing, disulfide bonds are present. As to expression, highest expression in heart and skeletal muscle. Low expression in brain, kidney, placenta, pancreas and lung. High expression in fetal brain. Also found in fetal lung, kidney and liver.

Its subcellular location is the cell membrane. The protein resides in the sarcolemma. The protein localises to the cytoplasm. It is found in the cytoskeleton. Its function is as follows. Component of the sarcoglycan complex, a subcomplex of the dystrophin-glycoprotein complex which forms a link between the F-actin cytoskeleton and the extracellular matrix. This is Beta-sarcoglycan (SGCB) from Homo sapiens (Human).